The following is a 572-amino-acid chain: Proline--tRNA ligase (572 aa).

This sequence belongs to the class-II aminoacyl-tRNA synthetase family. ProS type 1 subfamily. In terms of assembly, homodimer.

It is found in the cytoplasm. It catalyses the reaction tRNA(Pro) + L-proline + ATP = L-prolyl-tRNA(Pro) + AMP + diphosphate. Its function is as follows. Catalyzes the attachment of proline to tRNA(Pro) in a two-step reaction: proline is first activated by ATP to form Pro-AMP and then transferred to the acceptor end of tRNA(Pro). As ProRS can inadvertently accommodate and process non-cognate amino acids such as alanine and cysteine, to avoid such errors it has two additional distinct editing activities against alanine. One activity is designated as 'pretransfer' editing and involves the tRNA(Pro)-independent hydrolysis of activated Ala-AMP. The other activity is designated 'posttransfer' editing and involves deacylation of mischarged Ala-tRNA(Pro). The misacylated Cys-tRNA(Pro) is not edited by ProRS. The chain is Proline--tRNA ligase from Haemophilus influenzae (strain PittGG).